The following is a 525-amino-acid chain: DNA polymerase epsilon subunit 2 (525 aa).

It belongs to the DNA polymerase epsilon subunit B family. As to quaternary structure, component of the epsilon DNA polymerase complex consisting of four subunits: the catalytic subunit PolE1/DNApol-epsilon255 and the accessory subunits PolE2/DNApol-epsilon58, Chrac-14/DNApolE3 and PolE4.

Its subcellular location is the nucleus. Accessory component of the DNA polymerase epsilon complex. Participates in DNA repair and in chromosomal DNA replication. Has a role in the entrance and progression through S phase. Has a role in endoreplication. Essential for viability and tissue development. The chain is DNA polymerase epsilon subunit 2 from Drosophila melanogaster (Fruit fly).